Consider the following 208-residue polypeptide: Putative archaetidylserine decarboxylase proenzyme (208 aa).

The Schiff-base intermediate with substrate; via pyruvic acid role is filled by serine 172. Serine 172 carries the post-translational modification Pyruvic acid (Ser); by autocatalysis.

This sequence belongs to the phosphatidylserine decarboxylase family. PSD-A subfamily. As to quaternary structure, heterodimer of a large membrane-associated beta subunit and a small pyruvoyl-containing alpha subunit. Pyruvate is required as a cofactor. In terms of processing, is synthesized initially as an inactive proenzyme. Formation of the active enzyme involves a self-maturation process in which the active site pyruvoyl group is generated from an internal serine residue via an autocatalytic post-translational modification. Two non-identical subunits are generated from the proenzyme in this reaction, and the pyruvate is formed at the N-terminus of the alpha chain, which is derived from the carboxyl end of the proenzyme. The post-translation cleavage follows an unusual pathway, termed non-hydrolytic serinolysis, in which the side chain hydroxyl group of the serine supplies its oxygen atom to form the C-terminus of the beta chain, while the remainder of the serine residue undergoes an oxidative deamination to produce ammonia and the pyruvoyl prosthetic group on the alpha chain.

The protein localises to the cell membrane. It catalyses the reaction archaetidylserine + H(+) = archaetidylethanolamine + CO2. Catalyzes the formation of archaetidylethanolamine (PtdEtn) from archaetidylserine (PtdSer). In Methanosarcina acetivorans (strain ATCC 35395 / DSM 2834 / JCM 12185 / C2A), this protein is Putative archaetidylserine decarboxylase proenzyme.